The following is a 116-amino-acid chain: MSEVVQSVDPINFTESASLKVKELIEEEGDNSLSLRVYITGGGCSGFQYAFAFDNEIKEDDMVITKNGVRLLVDSMSFQYLVGADVDYKDDVEGAYFVIRNPNAKTTCGCGSSFSV.

Positions 44, 108, and 110 each coordinate iron-sulfur cluster.

It belongs to the HesB/IscA family. As to quaternary structure, homodimer. Iron-sulfur cluster is required as a cofactor.

Functionally, required for insertion of 4Fe-4S clusters for at least IspG. This Francisella philomiragia subsp. philomiragia (strain ATCC 25017 / CCUG 19701 / FSC 153 / O#319-036) protein is Iron-sulfur cluster insertion protein ErpA.